The following is a 940-amino-acid chain: MAESSAATQSPSVSSSSSGAEPSTLGGGGGSPGACPALGAKSCGSSCAVGLSSLCSDEPPSKIMTSSFLSSSEIYNPDPTTPLGSETLGSHLVAKDGKDPLVLLDKKTLDSPQGTNKDRVDTPVSLAADIPCSHPSIPDSFPEQPTFLSKETDPTEEWVVKNQEPKNPSEVPSGEDRSALDLGQRKAEHICTHSLSPSEPAVASVEKDSPESPFEVIIDKATFDREFKDLYKESTDDLGGWAAHGDRESPADLLEMNDKVFPLRNKEAGRYPSSALLGRQFSHTTAALEEVSRCVNDMHNFTNEILTWDLDPQAKQQADKSPCTTESTGLDRSEHRSEIPVINLKTSPQQKMPVCSFNGSTPITRSTGDWTETFTEGKPVKGYLSSTKEAGGKGVPDSSQPISGSGAATVEVTLPDLRGTWPNSVLGEVTEVDSSGESDDTVIEDTTENPSVKNNKVLPEKSDSLPSAAVKTSERENKETTSHETVRSEMYENSEQQQAHAETPTQRSLEGQMSPQVPNMLNEVIPENLAMTDTTRVCSAAPPSVLSETGFSLTVPASAKSESLLGKNVEDTDGSSPEDLMAALTGTEEKGTVDKEKGDVLEAVLEKIANVKNTLPVELLHENKLSSSETKNTKSKYSEHSRETNGGAPKVSSDLEQEQLTIRAIKELGAKQVQAERMSPGGKLKRTFDPQSGPQNSSDILEHTDITTGSDLGIPKKPTIIKDTRIDSISSLTKTETVNKHVLARLLSDFPVHDLIFWRDVKKTGFVFGTTLIMLLSLAAFSVISVVSYLILALLSVTISFRVYKSVIQAVQKSEEGHPFKAYLDVDITLSSEAFHSYMNAAMVHVNKALKLIIRLFLVEDLVDSLKLAVFMWLMTYVGAVFNGITLLILAELLVFSVPIVYEKYKTQIDHYVGIARDQTKSIVEKIQAKLPGIAKKKAE.

The span at 1–24 shows a compositional bias: low complexity; the sequence is MAESSAATQSPSVSSSSSGAEPST. Disordered regions lie at residues 1–32, 71–91, and 129–182; these read MAESSAATQSPSVSSSSSGAEPSTLGGGGGSP, SSEIYNPDPTTPLGSETLGSH, and DIPC…ALDL. The residue at position 2 (A2) is an N-acetylalanine. At 2 to 771 the chain is on the cytoplasmic side; sequence AESSAATQSP…KKTGFVFGTT (770 aa). Phosphoserine is present on S31. Residues S196, S204, S209, S212, S249, and S282 each carry the phosphoserine modification. Disordered regions lie at residues 314–335, 381–405, and 428–512; these read AKQQADKSPCTTESTGLDRSEH, KGYLSSTKEAGGKGVPDSSQPISGS, and EVTE…LEGQ. Residues 430–447 are compositionally biased toward acidic residues; the sequence is TEVDSSGESDDTVIEDTT. A compositionally biased stretch (basic and acidic residues) spans 472–490; that stretch reads TSERENKETTSHETVRSEM. The span at 491–512 shows a compositional bias: polar residues; that stretch reads YENSEQQQAHAETPTQRSLEGQ. Residue S508 is modified to Phosphoserine. T572 carries the post-translational modification Phosphothreonine. 3 positions are modified to phosphoserine: S575, S576, and S652. Disordered regions lie at residues 623–655 and 672–701; these read NKLSSSETKNTKSKYSEHSRETNGGAPKVSSDL and QVQAERMSPGGKLKRTFDPQSGPQNSSDIL. The segment covering 689 to 699 has biased composition (polar residues); the sequence is DPQSGPQNSSD. A Reticulon domain is found at 752 to 940; sequence VHDLIFWRDV…LPGIAKKKAE (189 aa). An intramembrane region (helical) is located at residues 772 to 795; it reads LIMLLSLAAFSVISVVSYLILALL. Topologically, residues 796–852 are cytoplasmic; it reads SVTISFRVYKSVIQAVQKSEEGHPFKAYLDVDITLSSEAFHSYMNAAMVHVNKALKL. Residues 853–875 constitute an intramembrane region (helical); it reads IIRLFLVEDLVDSLKLAVFMWLM. Topologically, residues 876–879 are cytoplasmic; the sequence is TYVG. Positions 880-902 form an intramembrane region, helical; sequence AVFNGITLLILAELLVFSVPIVY. An interaction with FADD region spans residues 895–940; that stretch reads VFSVPIVYEKYKTQIDHYVGIARDQTKSIVEKIQAKLPGIAKKKAE. Residues 903–940 are Cytoplasmic-facing; the sequence is EKYKTQIDHYVGIARDQTKSIVEKIQAKLPGIAKKKAE. The interaction with BACE1 stretch occupies residues 908 to 910; the sequence is QID.

Homodimer. Interacts with RTN4. Isoform 2 interacts with BACE1, BACE2, BCL2 and FADD. Interacts with ATL2. Interacts with TMEM33. Interacts with ATL1. Interacts with ZFYVE27 and with KIF5A in a ZFYVE27-dependent manner. Interacts with RIGI. Interacts with TRIM25. Present in olfactory bulb, olfactory epithelium and retina (at protein level).

It is found in the endoplasmic reticulum membrane. Its subcellular location is the golgi apparatus membrane. Functionally, may be involved in membrane trafficking in the early secretory pathway. Inhibits BACE1 activity and amyloid precursor protein processing. May induce caspase-8 cascade and apoptosis. May favor BCL2 translocation to the mitochondria upon endoplasmic reticulum stress. Induces the formation of endoplasmic reticulum tubules. Acts also as an inflammation-resolving regulator by interacting with both TRIM25 and RIGI, subsequently impairing RIGI 'Lys-63'-linked polyubiquitination leading to IRF3 and NF-kappa-B inhibition. In Rattus norvegicus (Rat), this protein is Reticulon-3 (Rtn3).